The chain runs to 908 residues: Transcriptional repressor ILP1 (908 aa).

2 disordered regions span residues 1–113 (MGSN…PQAG) and 238–277 (VGPR…EEDK). Positions 25-47 (ATPSSKPTSTLSSSKPKTLSASA) are enriched in low complexity. Residues 426–453 (MQNKGSLIEEIEDQMKELNEKHALSILE) are a coiled coil. A compositionally biased stretch (basic and acidic residues) spans 513–530 (EFGRDENLQKRREVEQRA). A disordered region spans residues 513–574 (EFGRDENLQK…ESDTETSAYK (62 aa)).

This sequence belongs to the GCF family. Interacts with STIPL1/NTR1.

The protein resides in the nucleus. In terms of biological role, transcriptional repressor regulating endoreduplication through control of A-type cyclins expression. Does not bind to promoter sequences (in vitro) and may act by interacting with tissue-specific transcription factors. Enhances the endocycle in endoreduplicating cells in seedlings. Required for efficient splicing. The protein is Transcriptional repressor ILP1 of Arabidopsis thaliana (Mouse-ear cress).